A 272-amino-acid polypeptide reads, in one-letter code: RNA exonuclease 4 (272 aa).

Over residues Met1 to Asn17 the composition is skewed to low complexity. A disordered region spans residues Met1–Lys33. The Exonuclease domain occupies Tyr99–Phe250.

Belongs to the REXO4 family.

Its subcellular location is the nucleus. Its function is as follows. Exoribonuclease involved in ribosome biosynthesis. Involved in the processing of ITS1, the internal transcribed spacer localized between the 18S and 5.8S rRNAs. The protein is RNA exonuclease 4 (REX4) of Debaryomyces hansenii (strain ATCC 36239 / CBS 767 / BCRC 21394 / JCM 1990 / NBRC 0083 / IGC 2968) (Yeast).